Reading from the N-terminus, the 131-residue chain is Small ribosomal subunit protein uS8 (131 aa).

The protein belongs to the universal ribosomal protein uS8 family. Part of the 30S ribosomal subunit. Contacts proteins S5 and S12.

Its function is as follows. One of the primary rRNA binding proteins, it binds directly to 16S rRNA central domain where it helps coordinate assembly of the platform of the 30S subunit. This chain is Small ribosomal subunit protein uS8, found in Sulfurovum sp. (strain NBC37-1).